The following is a 509-amino-acid chain: Scavenger receptor class B member 1 (509 aa).

Over 1 to 11 (MGGSSRARWVA) the chain is Cytoplasmic. A helical membrane pass occupies residues 12 to 32 (LGLGALGLLFAALGVVMILMV). Residues 33–440 (PSLIKQQVLK…YTQLVLMPQV (408 aa)) are Extracellular-facing. Residues asparagine 102, asparagine 108, asparagine 116, asparagine 173, asparagine 212, asparagine 227, asparagine 255, asparagine 288, asparagine 310, asparagine 330, and asparagine 383 are each glycosylated (N-linked (GlcNAc...) asparagine). Cysteines 251 and 384 form a disulfide. The chain crosses the membrane as a helical span at residues 441-461 (LHYAQYVLLGLGGLLLLVPII). Cysteine 462 carries S-palmitoyl cysteine lipidation. The Cytoplasmic segment spans residues 462 to 509 (CQLRSQEKCFLFWSGSKKGSQDKEAIQAYSESLMSPAAKGTVLQEAKL).

This sequence belongs to the CD36 family. As to quaternary structure, the C-terminal region binds to PDZK1. In terms of processing, N-glycosylated. The six cysteines of the extracellular domain are all involved in intramolecular disulfide bonds. Expressed primarily in liver, ovary and adrenal gland, and, at lower levels in other non-placental steroidogenic tissues, including adipose tissue, mammary gland and testis (at protein level). Isoform 2 is expressed at lower levels than isoform 1 in liver, testis and adrenal gland. At the mRNA, but not at the protein level, isoform 2 is the predominant isoform in testis (80%).

Its subcellular location is the cell membrane. It is found in the membrane. The protein resides in the caveola. Its function is as follows. Receptor for different ligands such as phospholipids, cholesterol ester, lipoproteins, phosphatidylserine and apoptotic cells. Both isoform 1 and isoform 2 act as receptors for HDL, mediating selective uptake of cholesteryl ether and HDL-dependent cholesterol efflux. Also facilitates the flux of free and esterified cholesterol between the cell surface and apoB-containing lipoproteins and modified lipoproteins, although less efficiently than HDL. May be involved in the phagocytosis of apoptotic cells, via its phosphatidylserine binding activity. In Mus musculus (Mouse), this protein is Scavenger receptor class B member 1 (Scarb1).